Here is an 865-residue protein sequence, read N- to C-terminus: Nicotinate catabolism cluster-specific transcription factor (865 aa).

2 C2H2-type zinc fingers span residues 8 to 32 (HACT…SLNH) and 41 to 63 (YTCQ…LDRH). A disordered region spans residues 74 to 168 (GKGVLETRKR…SIDDDGTDPD (95 aa)). Positions 77–87 (VLETRKRMRRA) match the Nuclear localization signal(NLS) motif. Residues 78-89 (LETRKRMRRAED) show a composition bias toward basic and acidic residues. The span at 96–105 (PPKRPSRHQQ) shows a compositional bias: basic residues. Positions 108-132 (GPPVGAPLSSSGSVSAGSGRSSRSP) are enriched in low complexity. Positions 285 to 289 (LDIDL) match the Nuclear export signal (NES) motif.

Its subcellular location is the nucleus. Transcription factor that specifically regulates the expression of the hxn gene cluster that mediates the degradation of nicotinate and related metabolites. The protein is Nicotinate catabolism cluster-specific transcription factor of Emericella nidulans (strain FGSC A4 / ATCC 38163 / CBS 112.46 / NRRL 194 / M139) (Aspergillus nidulans).